The sequence spans 107 residues: uncharacterized protein (107 aa).

This is an uncharacterized protein from Acidianus convivator (ABV).